We begin with the raw amino-acid sequence, 258 residues long: Neurotrophin-3 (258 aa).

Residues 1-18 (MSILFYVIFLAYLRGIQG) form the signal peptide. A propeptide spanning residues 19–139 (NNMDQRSLPE…TNRTSPRRKR (121 aa)) is cleaved from the precursor. Residues 60–85 (QSTLPKAEAPREPEQGEATRSEFQPM) form a disordered region. Residues 67–79 (EAPREPEQGEATR) are compositionally biased toward basic and acidic residues. N-linked (GlcNAc...) asparagine glycosylation occurs at Asn131. Intrachain disulfides connect Cys153–Cys218, Cys196–Cys247, and Cys206–Cys249.

It belongs to the NGF-beta family. As to expression, brain and peripheral tissues.

The protein localises to the secreted. Seems to promote the survival of visceral and proprioceptive sensory neurons. The chain is Neurotrophin-3 (Ntf3) from Rattus norvegicus (Rat).